We begin with the raw amino-acid sequence, 109 residues long: Cell division protein ZapA (109 aa).

The stretch at 21-97 (PEQQEALNQA…QTIEQALVEQ (77 aa)) forms a coiled coil.

This sequence belongs to the ZapA family. Type 1 subfamily. In terms of assembly, homodimer. Interacts with FtsZ.

It localises to the cytoplasm. Activator of cell division through the inhibition of FtsZ GTPase activity, therefore promoting FtsZ assembly into bundles of protofilaments necessary for the formation of the division Z ring. It is recruited early at mid-cell but it is not essential for cell division. This Sodalis glossinidius (strain morsitans) protein is Cell division protein ZapA.